The following is a 244-amino-acid chain: NAD(P)H-quinone oxidoreductase subunit K (244 aa).

[4Fe-4S] cluster-binding residues include C51, C52, C116, and C147.

Belongs to the complex I 20 kDa subunit family. As to quaternary structure, NDH-1 can be composed of about 15 different subunits; different subcomplexes with different compositions have been identified which probably have different functions. [4Fe-4S] cluster serves as cofactor.

It localises to the cellular thylakoid membrane. The catalysed reaction is a plastoquinone + NADH + (n+1) H(+)(in) = a plastoquinol + NAD(+) + n H(+)(out). It catalyses the reaction a plastoquinone + NADPH + (n+1) H(+)(in) = a plastoquinol + NADP(+) + n H(+)(out). Its function is as follows. NDH-1 shuttles electrons from an unknown electron donor, via FMN and iron-sulfur (Fe-S) centers, to quinones in the respiratory and/or the photosynthetic chain. The immediate electron acceptor for the enzyme in this species is believed to be plastoquinone. Couples the redox reaction to proton translocation, and thus conserves the redox energy in a proton gradient. Cyanobacterial NDH-1 also plays a role in inorganic carbon-concentration. This is NAD(P)H-quinone oxidoreductase subunit K from Synechococcus sp. (strain JA-3-3Ab) (Cyanobacteria bacterium Yellowstone A-Prime).